Reading from the N-terminus, the 283-residue chain is Bifunctional protein FolD (283 aa).

Residues 165–167 (GRS), serine 190, and threonine 231 each bind NADP(+).

The protein belongs to the tetrahydrofolate dehydrogenase/cyclohydrolase family. As to quaternary structure, homodimer.

It carries out the reaction (6R)-5,10-methylene-5,6,7,8-tetrahydrofolate + NADP(+) = (6R)-5,10-methenyltetrahydrofolate + NADPH. It catalyses the reaction (6R)-5,10-methenyltetrahydrofolate + H2O = (6R)-10-formyltetrahydrofolate + H(+). It functions in the pathway one-carbon metabolism; tetrahydrofolate interconversion. Catalyzes the oxidation of 5,10-methylenetetrahydrofolate to 5,10-methenyltetrahydrofolate and then the hydrolysis of 5,10-methenyltetrahydrofolate to 10-formyltetrahydrofolate. This is Bifunctional protein FolD from Nocardia farcinica (strain IFM 10152).